We begin with the raw amino-acid sequence, 874 residues long: Alanine--tRNA ligase (874 aa).

His564, His568, Cys665, and His669 together coordinate Zn(2+).

This sequence belongs to the class-II aminoacyl-tRNA synthetase family. Requires Zn(2+) as cofactor.

It localises to the cytoplasm. It catalyses the reaction tRNA(Ala) + L-alanine + ATP = L-alanyl-tRNA(Ala) + AMP + diphosphate. Functionally, catalyzes the attachment of alanine to tRNA(Ala) in a two-step reaction: alanine is first activated by ATP to form Ala-AMP and then transferred to the acceptor end of tRNA(Ala). Also edits incorrectly charged Ser-tRNA(Ala) and Gly-tRNA(Ala) via its editing domain. This Paraburkholderia phytofirmans (strain DSM 17436 / LMG 22146 / PsJN) (Burkholderia phytofirmans) protein is Alanine--tRNA ligase.